The chain runs to 260 residues: Troponin I 3 (260 aa).

Over residues 192–219 (DLDEIMAKKKGTADGKPEWSKKEKKEEE) the composition is skewed to basic and acidic residues. Residues 192-260 (DLDEIMAKKK…EEEEEEEEEE (69 aa)) are disordered. Positions 231–260 (PEAEPEPEAAEPAAEEPEAEEEEEEEEEEE) are enriched in acidic residues.

This sequence belongs to the troponin I family. As to expression, expressed in body wall muscle from first larval stage to adult. In adults expression is predominantly in vulval and anal muscles, body wall muscle expression is weaker. Also expressed in vulval muscles of hermaphrodites and the sex muscles of males.

Troponin I is the inhibitory subunit of troponin, the thin filament regulatory complex which confers calcium-sensitivity to muscle actomyosin ATPase activity. The polypeptide is Troponin I 3 (tni-3) (Caenorhabditis elegans).